The primary structure comprises 61 residues: Small ribosomal subunit protein uS14B (61 aa).

Zn(2+) is bound by residues Cys-24, Cys-27, Cys-40, and Cys-43.

The protein belongs to the universal ribosomal protein uS14 family. Zinc-binding uS14 subfamily. As to quaternary structure, part of the 30S ribosomal subunit. Contacts proteins S3 and S10. Requires Zn(2+) as cofactor.

Its function is as follows. Binds 16S rRNA, required for the assembly of 30S particles and may also be responsible for determining the conformation of the 16S rRNA at the A site. This is Small ribosomal subunit protein uS14B from Streptomyces avermitilis (strain ATCC 31267 / DSM 46492 / JCM 5070 / NBRC 14893 / NCIMB 12804 / NRRL 8165 / MA-4680).